The primary structure comprises 146 residues: Large ribosomal subunit protein uL16 (146 aa).

The protein belongs to the universal ribosomal protein uL16 family. In terms of assembly, part of the 50S ribosomal subunit.

In terms of biological role, binds 23S rRNA and is also seen to make contacts with the A and possibly P site tRNAs. In Caulobacter sp. (strain K31), this protein is Large ribosomal subunit protein uL16.